A 379-amino-acid polypeptide reads, in one-letter code: Chaperone protein DnaJ (379 aa).

Residues 4–69 enclose the J domain; the sequence is DLYETLGVQK…QKRAAYDRYG (66 aa). The segment at 137-215 adopts a CR-type zinc-finger fold; the sequence is GKTAQIRVPT…CHGQGRVVEE (79 aa). Positions 150, 153, 167, 170, 189, 192, 203, and 206 each coordinate Zn(2+). 4 CXXCXGXG motif repeats span residues 150 to 157, 167 to 174, 189 to 196, and 203 to 210; these read CDVCTGTG, CGTCQGTG, CPTCGGRG, and CTKCHGQG.

This sequence belongs to the DnaJ family. As to quaternary structure, homodimer. It depends on Zn(2+) as a cofactor.

It is found in the cytoplasm. Functionally, participates actively in the response to hyperosmotic and heat shock by preventing the aggregation of stress-denatured proteins and by disaggregating proteins, also in an autonomous, DnaK-independent fashion. Unfolded proteins bind initially to DnaJ; upon interaction with the DnaJ-bound protein, DnaK hydrolyzes its bound ATP, resulting in the formation of a stable complex. GrpE releases ADP from DnaK; ATP binding to DnaK triggers the release of the substrate protein, thus completing the reaction cycle. Several rounds of ATP-dependent interactions between DnaJ, DnaK and GrpE are required for fully efficient folding. Also involved, together with DnaK and GrpE, in the DNA replication of plasmids through activation of initiation proteins. The chain is Chaperone protein DnaJ from Rhizobium meliloti (strain 1021) (Ensifer meliloti).